Consider the following 309-residue polypeptide: GTP cyclohydrolase MptA (309 aa).

Belongs to the GTP cyclohydrolase IV family. Homodimer. It depends on Fe(2+) as a cofactor.

It carries out the reaction GTP + H2O = 7,8-dihydroneopterin 2',3'-cyclic phosphate + formate + diphosphate + H(+). Its pathway is cofactor biosynthesis; 5,6,7,8-tetrahydromethanopterin biosynthesis. In terms of biological role, converts GTP to 7,8-dihydro-D-neopterin 2',3'-cyclic phosphate, the first intermediate in the biosynthesis of coenzyme methanopterin. This is GTP cyclohydrolase MptA from Methanococcus aeolicus (strain ATCC BAA-1280 / DSM 17508 / OCM 812 / Nankai-3).